A 96-amino-acid chain; its full sequence is Cytochrome c-553 (96 aa).

An N-terminal signal peptide occupies residues 1-19 (MKKVIMALGVLAFANALMA). The heme c site is built by Cys29, Cys32, His33, and Met73.

It belongs to the cytochrome c family. In terms of processing, binds 1 heme c group covalently per subunit.

The protein resides in the periplasm. Functionally, natural electron acceptor for a formate dehydrogenase. The polypeptide is Cytochrome c-553 (Helicobacter pylori (strain ATCC 700392 / 26695) (Campylobacter pylori)).